We begin with the raw amino-acid sequence, 300 residues long: Protein p34 (300 aa).

A run of 5 helical transmembrane segments spans residues 14–34 (YLSVTTALIILIIKLYAWVVT), 39–59 (ILASLIDSMLDITSSFINLVA), 87–107 (SIFFFASAFFVGFASVKSLFI), 119–139 (IIMYLCMFLTIILVLYQTYVI), and 170–190 (LSDYFWFVDPLFGVVISLYIF).

This sequence belongs to the cation diffusion facilitator (CDF) transporter (TC 2.A.4) family.

The protein localises to the cell membrane. This is Protein p34 (p34) from Rickettsia prowazekii (strain Madrid E).